We begin with the raw amino-acid sequence, 62 residues long: Large ribosomal subunit protein bL32 (62 aa).

The span at 1 to 16 (MAVPKRKTSPSRRGMR) shows a compositional bias: basic residues. Residues 1–62 (MAVPKRKTSP…QILKPKTAEV (62 aa)) form a disordered region. Basic and acidic residues predominate over residues 28-44 (VEDKDSGELRRPHHLDL).

It belongs to the bacterial ribosomal protein bL32 family.

This chain is Large ribosomal subunit protein bL32, found in Azorhizobium caulinodans (strain ATCC 43989 / DSM 5975 / JCM 20966 / LMG 6465 / NBRC 14845 / NCIMB 13405 / ORS 571).